We begin with the raw amino-acid sequence, 267 residues long: Integral membrane protein 2C (267 aa).

Phosphothreonine is present on Thr-37. A helical; Signal-anchor for type II membrane protein transmembrane segment spans residues 55-75 (VGGVCYLSMGMVVLLMGLVFA). The BRICHOS domain occupies 136–230 (FGGGDPADII…LCNGKDTYRL (95 aa)). Cys-163 and Cys-222 are oxidised to a cystine. The N-linked (GlcNAc...) asparagine glycan is linked to Asn-169.

It belongs to the ITM2 family. In terms of assembly, interacts with BACE1. Interacts with APP. Interacts with STMN2. Post-translationally, type I membrane-bound, as well as soluble, furin has a pre-eminent role in ITM2C proteolytic processing. PCSK7 and PCSK5 may also be involved although to a lesser extent. The soluble form of PCSK7 is incapable of processing ITM2C. Fails to undergo shedding by ADAM10 and intramembrane cleavage by SPPL2B.

It localises to the lysosome membrane. It is found in the cell membrane. Functionally, negative regulator of amyloid-beta peptide production. May inhibit the processing of APP by blocking its access to alpha- and beta-secretase. Binding to the beta-secretase-cleaved APP C-terminal fragment is negligible, suggesting that ITM2C is a poor gamma-secretase cleavage inhibitor. May play a role in TNF-induced cell death and neuronal differentiation. The sequence is that of Integral membrane protein 2C (ITM2C) from Macaca fascicularis (Crab-eating macaque).